A 113-amino-acid polypeptide reads, in one-letter code: Kita-kyushu lung cancer antigen 1 (113 aa).

Residues 1-3 (MNF) are Cytoplasmic-facing. A helical; Signal-anchor for type II membrane protein transmembrane segment spans residues 4-21 (YLLLASSILCALIVFWKY). Topologically, residues 22–113 (RRFQRNTGEM…RGASPHRKST (92 aa)) are extracellular. N-linked (GlcNAc...) asparagine glycosylation occurs at Asn83.

As to expression, specifically expressed in testis. Expressed by cancer cell lines.

Its subcellular location is the cell membrane. The sequence is that of Kita-kyushu lung cancer antigen 1 (CT83) from Homo sapiens (Human).